A 313-amino-acid polypeptide reads, in one-letter code: 4-diphosphocytidyl-2-C-methyl-D-erythritol kinase (313 aa).

The active site involves K27. 110–120 (PIGGGVGGGSS) serves as a coordination point for ATP. D152 is an active-site residue.

It belongs to the GHMP kinase family. IspE subfamily.

It catalyses the reaction 4-CDP-2-C-methyl-D-erythritol + ATP = 4-CDP-2-C-methyl-D-erythritol 2-phosphate + ADP + H(+). The protein operates within isoprenoid biosynthesis; isopentenyl diphosphate biosynthesis via DXP pathway; isopentenyl diphosphate from 1-deoxy-D-xylulose 5-phosphate: step 3/6. Functionally, catalyzes the phosphorylation of the position 2 hydroxy group of 4-diphosphocytidyl-2C-methyl-D-erythritol. The sequence is that of 4-diphosphocytidyl-2-C-methyl-D-erythritol kinase from Histophilus somni (strain 129Pt) (Haemophilus somnus).